Reading from the N-terminus, the 854-residue chain is ATP-dependent zinc metalloprotease FtsH (854 aa).

Residues 1–5 (MNRKT) are Cytoplasmic-facing. The chain crosses the membrane as a helical span at residues 6-26 (VFRNVLLVAVVLLVIYAFSYF). The Extracellular portion of the chain corresponds to 27–112 (SNDTRDFKTV…FNTTVTQESW (86 aa)). A helical transmembrane segment spans residues 113 to 133 (LTSILLFVLPMIILFGIFFFV). The Cytoplasmic portion of the chain corresponds to 134–854 (MNRMQGGGGR…ARWDGPDGSR (721 aa)). Residue 207–214 (GPPGTGKT) participates in ATP binding. Residue histidine 429 participates in Zn(2+) binding. Residue glutamate 430 is part of the active site. Residues histidine 433 and aspartate 505 each contribute to the Zn(2+) site. Residues 658 to 854 (AGAPNSGVPN…ARWDGPDGSR (197 aa)) are disordered. 2 stretches are compositionally biased toward low complexity: residues 661-692 (PNSG…AQPS) and 698-719 (APQQ…WSAP). A compositionally biased stretch (pro residues) spans 720-730 (GWPPRENPSPT). A compositionally biased stretch (low complexity) spans 749-778 (NQSQGQYGQPQHGQPQPDQGQYGQPHPGQQ). Residues 812-822 (GNPSGENQWQS) are compositionally biased toward polar residues. Pro residues predominate over residues 825–834 (PEQPQTPPPH).

It in the central section; belongs to the AAA ATPase family. In the C-terminal section; belongs to the peptidase M41 family. As to quaternary structure, homohexamer. Requires Zn(2+) as cofactor.

The protein localises to the cell membrane. Functionally, acts as a processive, ATP-dependent zinc metallopeptidase for both cytoplasmic and membrane proteins. Plays a role in the quality control of integral membrane proteins. The chain is ATP-dependent zinc metalloprotease FtsH from Rhodococcus erythropolis (strain PR4 / NBRC 100887).